A 419-amino-acid polypeptide reads, in one-letter code: Serine/threonine-protein kinase Kist (419 aa).

Residues 23–303 (WQVQSRLGSG…PAEMALCSPF (281 aa)) form the Protein kinase domain. ATP is bound by residues 29–37 (LGSGSSASV) and Lys54. The Proton acceptor role is filled by Asp158. The region spanning 323 to 405 (LRLLNVLDDD…GKFVVATFYP (83 aa)) is the RRM domain.

Belongs to the protein kinase superfamily. Ser/Thr protein kinase family. In terms of assembly, interacts with PAM and CDKN1B/p27Kip1. Interacts with stathmin.

Its subcellular location is the nucleus. It carries out the reaction L-seryl-[protein] + ATP = O-phospho-L-seryl-[protein] + ADP + H(+). It catalyses the reaction L-threonyl-[protein] + ATP = O-phospho-L-threonyl-[protein] + ADP + H(+). Its function is as follows. Upon serum stimulation, phosphorylates CDKN1B/p27Kip1, thus controlling CDKN1B subcellular location and cell cycle progression in G1 phase. May be involved in trafficking and/or processing of RNA. This is Serine/threonine-protein kinase Kist (Uhmk1) from Mus musculus (Mouse).